Reading from the N-terminus, the 285-residue chain is NADPH-dependent 7-cyano-7-deazaguanine reductase (285 aa).

80–82 (VES) contacts substrate. 82 to 83 (SK) contributes to the NADPH binding site. The active-site Thioimide intermediate is the C191. D198 functions as the Proton donor in the catalytic mechanism. Position 231–232 (231–232 (HE)) interacts with substrate. NADPH is bound at residue 260–261 (RG).

The protein belongs to the GTP cyclohydrolase I family. QueF type 2 subfamily. As to quaternary structure, homodimer.

The protein resides in the cytoplasm. It carries out the reaction 7-aminomethyl-7-carbaguanine + 2 NADP(+) = 7-cyano-7-deazaguanine + 2 NADPH + 3 H(+). It functions in the pathway tRNA modification; tRNA-queuosine biosynthesis. Its function is as follows. Catalyzes the NADPH-dependent reduction of 7-cyano-7-deazaguanine (preQ0) to 7-aminomethyl-7-deazaguanine (preQ1). The protein is NADPH-dependent 7-cyano-7-deazaguanine reductase of Psychrobacter arcticus (strain DSM 17307 / VKM B-2377 / 273-4).